The primary structure comprises 154 residues: uncharacterized protein (154 aa).

2 helical membrane passes run 54-74 (FLIT…IYLL) and 81-101 (FAFV…FFLS).

It is found in the cell membrane. This is an uncharacterized protein from Mycoplasma genitalium (strain ATCC 33530 / DSM 19775 / NCTC 10195 / G37) (Mycoplasmoides genitalium).